A 255-amino-acid polypeptide reads, in one-letter code: Hydroxyacylglutathione hydrolase (255 aa).

Residues H56, H58, D60, H61, H114, D133, and H171 each coordinate Zn(2+).

The protein belongs to the metallo-beta-lactamase superfamily. Glyoxalase II family. Monomer. Zn(2+) serves as cofactor.

It catalyses the reaction an S-(2-hydroxyacyl)glutathione + H2O = a 2-hydroxy carboxylate + glutathione + H(+). It participates in secondary metabolite metabolism; methylglyoxal degradation; (R)-lactate from methylglyoxal: step 2/2. Functionally, thiolesterase that catalyzes the hydrolysis of S-D-lactoyl-glutathione to form glutathione and D-lactic acid. The protein is Hydroxyacylglutathione hydrolase of Bradyrhizobium diazoefficiens (strain JCM 10833 / BCRC 13528 / IAM 13628 / NBRC 14792 / USDA 110).